The sequence spans 323 residues: Melanocortin receptor 3 (323 aa).

Topologically, residues 1–37 (MNSSCCLSSVSPMLPNLSEHPAAPPASNRSGSGFCEQ) are extracellular. N2, N16, and N28 each carry an N-linked (GlcNAc...) asparagine glycan. The helical transmembrane segment at 38-63 (VFIKPEVFLALGIVSLMENILVILAV) threads the bilayer. The Cytoplasmic portion of the chain corresponds to 64–75 (VRNGNLHSPMYF). A helical transmembrane segment spans residues 76-100 (FLCSLAAADMLVSLSNSLETIMIAV). At 101-118 (INSDSLTLEDQFIQHMDN) the chain is on the extracellular side. The chain crosses the membrane as a helical span at residues 119-140 (IFDSMICISLVASICNLLAIAI). Residues 141-160 (DRYVTIFYALRYHSIMTVRK) lie on the Cytoplasmic side of the membrane. Residues 161–181 (ALTLIGVIWVCCGICGVMFII) traverse the membrane as a helical segment. Topologically, residues 182–186 (YSESK) are extracellular. The helical transmembrane segment at 187-210 (MVIVCLITMFFAMVLLMGTLYIHM) threads the bilayer. The Cytoplasmic portion of the chain corresponds to 211-245 (FLFARLHVQRIAVLPPAGVVAPQQHSCMKGAVTIT). Residues 246–268 (ILLGVFIFCWAPFFLHLVLIITC) form a helical membrane-spanning segment. Over 269–277 (PTNPYCICY) the chain is Extracellular. A helical membrane pass occupies residues 278–301 (TAHFNTYLVLIMCNSVIDPLIYAF). Residues 302 to 323 (RSLELRNTFKEILCGCNSMNLG) lie on the Cytoplasmic side of the membrane. The S-palmitoyl cysteine moiety is linked to residue C315.

It belongs to the G-protein coupled receptor 1 family. In terms of tissue distribution, brain.

The protein localises to the cell membrane. Receptor for MSH (alpha, beta and gamma) and ACTH. This receptor is mediated by G proteins which activate adenylate cyclase. Required for expression of anticipatory patterns of activity and wakefulness during periods of limited nutrient availability and for the normal regulation of circadian clock activity in the brain. This is Melanocortin receptor 3 (Mc3r) from Mus musculus (Mouse).